A 185-amino-acid polypeptide reads, in one-letter code: UPF0301 protein IL2218 (185 aa).

It belongs to the UPF0301 (AlgH) family.

This chain is UPF0301 protein IL2218, found in Idiomarina loihiensis (strain ATCC BAA-735 / DSM 15497 / L2-TR).